We begin with the raw amino-acid sequence, 257 residues long: 3-deoxy-manno-octulosonate cytidylyltransferase (257 aa).

The protein belongs to the KdsB family.

It is found in the cytoplasm. The enzyme catalyses 3-deoxy-alpha-D-manno-oct-2-ulosonate + CTP = CMP-3-deoxy-beta-D-manno-octulosonate + diphosphate. It functions in the pathway nucleotide-sugar biosynthesis; CMP-3-deoxy-D-manno-octulosonate biosynthesis; CMP-3-deoxy-D-manno-octulosonate from 3-deoxy-D-manno-octulosonate and CTP: step 1/1. The protein operates within bacterial outer membrane biogenesis; lipopolysaccharide biosynthesis. In terms of biological role, activates KDO (a required 8-carbon sugar) for incorporation into bacterial lipopolysaccharide in Gram-negative bacteria. This Xylella fastidiosa (strain 9a5c) protein is 3-deoxy-manno-octulosonate cytidylyltransferase.